The following is a 412-amino-acid chain: Peptidase T (412 aa).

A Zn(2+)-binding site is contributed by His-81. Residue Asp-83 is part of the active site. Asp-144 lines the Zn(2+) pocket. Glu-178 functions as the Proton acceptor in the catalytic mechanism. Positions 179, 201, and 383 each coordinate Zn(2+).

This sequence belongs to the peptidase M20B family. It depends on Zn(2+) as a cofactor.

It is found in the cytoplasm. It catalyses the reaction Release of the N-terminal residue from a tripeptide.. Functionally, cleaves the N-terminal amino acid of tripeptides. This Bacillus cereus (strain Q1) protein is Peptidase T.